The primary structure comprises 347 residues: 4-hydroxy-2-oxovalerate aldolase 2 (347 aa).

In terms of domain architecture, Pyruvate carboxyltransferase spans 7 to 259; sequence VRITDTSLRD…KTGIDFFDIA (253 aa). 15-16 contacts substrate; it reads RD. A Mn(2+)-binding site is contributed by Asp-16. His-19 serves as the catalytic Proton acceptor. The substrate site is built by Ser-169 and His-198. Mn(2+)-binding residues include His-198 and His-200. Position 289 (Tyr-289) interacts with substrate.

It belongs to the 4-hydroxy-2-oxovalerate aldolase family.

The enzyme catalyses (S)-4-hydroxy-2-oxopentanoate = acetaldehyde + pyruvate. The sequence is that of 4-hydroxy-2-oxovalerate aldolase 2 from Mycobacterium ulcerans (strain Agy99).